The sequence spans 389 residues: Na(+)/H(+) antiporter NhaA 1 (389 aa).

The next 11 membrane-spanning stretches (helical) occupy residues 12-32, 62-82, 97-117, 128-148, 157-177, 184-204, 220-240, 260-280, 282-302, 331-351, and 365-385; these read VLNE…ALLV, FLLW…GLEL, IVLP…LFAL, GWAI…MMCG, IFLL…IAIF, IVAF…NLLG, ISVL…AFFI, FWIA…VNLS, IDIG…LFVG, LYGV…IDGL, and LAIL…LKFF.

Belongs to the NhaA Na(+)/H(+) (TC 2.A.33) antiporter family.

The protein localises to the cell inner membrane. The enzyme catalyses Na(+)(in) + 2 H(+)(out) = Na(+)(out) + 2 H(+)(in). Na(+)/H(+) antiporter that extrudes sodium in exchange for external protons. The sequence is that of Na(+)/H(+) antiporter NhaA 1 from Campylobacter jejuni (strain RM1221).